Reading from the N-terminus, the 192-residue chain is MEENWLEIGTIVAPQGLEGELRVLSVSDFPERFQKRGMRGIQGPQGGEIREITLLRGRELPGKNVYVIKLEGVENREQAEALRGYKLWANKLEKPRLKADEYHVSELVNLEVYHHLTGEKIGVVVDIFWAGNDILAVQLEANLASVKKKSPSSDSEARALVPFVKEIVPLVDLKAARIEIAPPPGLLEINLS.

The 88-residue stretch at 99-186 (ADEYHVSELV…RIEIAPPPGL (88 aa)) folds into the PRC barrel domain.

This sequence belongs to the RimM family. As to quaternary structure, binds ribosomal protein uS19.

It is found in the cytoplasm. Functionally, an accessory protein needed during the final step in the assembly of 30S ribosomal subunit, possibly for assembly of the head region. Essential for efficient processing of 16S rRNA. May be needed both before and after RbfA during the maturation of 16S rRNA. It has affinity for free ribosomal 30S subunits but not for 70S ribosomes. This chain is Ribosome maturation factor RimM, found in Microcystis aeruginosa (strain NIES-843 / IAM M-2473).